Reading from the N-terminus, the 460-residue chain is MSQTSSNPATLRLPFKEKLAYGLGDLGSNILLDIGTLYLLKFYTDVLGLPGTYGGIIFLIAKFFTAFTDMGTGIMLDSRRKIGPKGKFRPFVLYAAFPVTLLAIANFVGTPFEVTGKTVVATMLFMLYGLVFSMMNCSYGAMVPAITKNPDERASLAAWRQGGATLGLLLCTVGFVPVMNLIEGNAQLSYIFAATLFSLFGLLFMWLCYAGVKERYVEVKPVDSAQKPGLLQSFRAIAGNRPLFILCIANLCTLGAFNVKLAIQVYYTQYVLNDPILLSWMGFFSMGCIFIGVFLMPGAVRRFGKKKVYIGGLLIWVAGDLLNYFFGGGSVSFVAFSCLAFFGSAFVNSLNWALVSDTVEYGEWRTGVRSEGTVYTGFTFFRKVSQALAGFFPGWMLTQIGYIPNVVQSAGTVEGLRQLIFIYPCVLAVITIIAMGCFYNLNEKMYVRIVEEIEARKHTV.

Topologically, residues 1 to 18 are cytoplasmic; that stretch reads MSQTSSNPATLRLPFKEK. A helical transmembrane segment spans residues 19-39; the sequence is LAYGLGDLGSNILLDIGTLYL. Residues 40–46 are Periplasmic-facing; sequence LKFYTDV. Residues 47 to 67 traverse the membrane as a helical segment; sequence LGLPGTYGGIIFLIAKFFTAF. Topologically, residues 68-91 are cytoplasmic; sequence TDMGTGIMLDSRRKIGPKGKFRPF. A helical membrane pass occupies residues 92–112; the sequence is VLYAAFPVTLLAIANFVGTPF. The Periplasmic portion of the chain corresponds to 113–122; that stretch reads EVTGKTVVAT. A helical membrane pass occupies residues 123 to 143; sequence MLFMLYGLVFSMMNCSYGAMV. At 144–161 the chain is on the cytoplasmic side; sequence PAITKNPDERASLAAWRQ. Residues 162 to 182 traverse the membrane as a helical segment; the sequence is GGATLGLLLCTVGFVPVMNLI. Topologically, residues 183-190 are periplasmic; the sequence is EGNAQLSY. Residues 191-211 traverse the membrane as a helical segment; that stretch reads IFAATLFSLFGLLFMWLCYAG. Over 212-242 the chain is Cytoplasmic; that stretch reads VKERYVEVKPVDSAQKPGLLQSFRAIAGNRP. A helical transmembrane segment spans residues 243 to 263; sequence LFILCIANLCTLGAFNVKLAI. Residues 264-275 lie on the Periplasmic side of the membrane; the sequence is QVYYTQYVLNDP. A helical membrane pass occupies residues 276-296; sequence ILLSWMGFFSMGCIFIGVFLM. The Cytoplasmic segment spans residues 297–307; it reads PGAVRRFGKKK. Residues 308–328 form a helical membrane-spanning segment; sequence VYIGGLLIWVAGDLLNYFFGG. Glycine 329 is a topological domain (periplasmic). The helical transmembrane segment at 330 to 350 threads the bilayer; sequence SVSFVAFSCLAFFGSAFVNSL. The Cytoplasmic portion of the chain corresponds to 351–386; that stretch reads NWALVSDTVEYGEWRTGVRSEGTVYTGFTFFRKVSQ. A helical transmembrane segment spans residues 387–407; the sequence is ALAGFFPGWMLTQIGYIPNVV. Residues 408 to 418 are Periplasmic-facing; it reads QSAGTVEGLRQ. The helical transmembrane segment at 419–439 threads the bilayer; the sequence is LIFIYPCVLAVITIIAMGCFY. The Cytoplasmic segment spans residues 440–460; the sequence is NLNEKMYVRIVEEIEARKHTV.

It belongs to the sodium:galactoside symporter (TC 2.A.2) family.

It localises to the cell inner membrane. Could be involved in the export of 2,3-dihydroxypropane-1-sulfonate (DHPS). The sequence is that of Putative 2,3-dihydroxypropane-1-sulfonate exporter (yihP) from Salmonella typhimurium (strain LT2 / SGSC1412 / ATCC 700720).